An 85-amino-acid polypeptide reads, in one-letter code: Small ribosomal subunit protein eS21 (85 aa).

It belongs to the eukaryotic ribosomal protein eS21 family. Component of the 40S small ribosomal subunit.

It is found in the cytoplasm. The protein localises to the cytosol. The protein resides in the rough endoplasmic reticulum. The polypeptide is Small ribosomal subunit protein eS21 (rps-21) (Pectinaria gouldii (Trumpet worm)).